The primary structure comprises 339 residues: Dihydroorotate dehydrogenase (quinone) (339 aa).

FMN-binding positions include Ala62–Lys66 and Thr86. Lys66 contributes to the substrate binding site. Substrate is bound at residue Asn111 to Phe115. FMN-binding residues include Asn139 and Asn172. Asn172 is a binding site for substrate. Ser175 functions as the Nucleophile in the catalytic mechanism. Asn177 is a binding site for substrate. FMN contacts are provided by Lys217 and Thr245. Residue Asn246–Thr247 participates in substrate binding. FMN is bound by residues Gly268, Gly297, and Tyr318–Ser319.

The protein belongs to the dihydroorotate dehydrogenase family. Type 2 subfamily. As to quaternary structure, monomer. FMN is required as a cofactor.

Its subcellular location is the cell membrane. It catalyses the reaction (S)-dihydroorotate + a quinone = orotate + a quinol. Its pathway is pyrimidine metabolism; UMP biosynthesis via de novo pathway; orotate from (S)-dihydroorotate (quinone route): step 1/1. Its function is as follows. Catalyzes the conversion of dihydroorotate to orotate with quinone as electron acceptor. This chain is Dihydroorotate dehydrogenase (quinone), found in Shewanella piezotolerans (strain WP3 / JCM 13877).